The sequence spans 428 residues: Isocitrate lyase 1 (428 aa).

91–93 contacts substrate; sequence SGW. D153 is a Mg(2+) binding site. Catalysis depends on C191, which acts as the Proton acceptor. Substrate contacts are provided by residues 192-193, R228, 313-317, and T347; these read GH and NCSPS.

The protein belongs to the isocitrate lyase/PEP mutase superfamily. Isocitrate lyase family. Homotetramer. It depends on Mg(2+) as a cofactor.

The catalysed reaction is D-threo-isocitrate = glyoxylate + succinate. It carries out the reaction (2S,3R)-3-hydroxybutane-1,2,3-tricarboxylate = pyruvate + succinate. It participates in carbohydrate metabolism; glyoxylate cycle; (S)-malate from isocitrate: step 1/2. In terms of biological role, involved in the persistence and virulence of M.tuberculosis. Catalyzes the reversible formation of succinate and glyoxylate from isocitrate, a key step of the glyoxylate cycle, which operates as an anaplerotic route for replenishing the tricarboxylic acid cycle during growth on fatty acid substrates. It also catalyzes the formation of pyruvate and succinate from 2-methylisocitrate, a key step in the methylcitrate cycle (propionate degradation route). This Mycobacterium tuberculosis (strain ATCC 35801 / TMC 107 / Erdman) protein is Isocitrate lyase 1 (icl1).